The chain runs to 141 residues: Hydroperoxide reductase (141 aa).

The protein belongs to the OsmC/Ohr family. As to quaternary structure, homodimer.

It localises to the cytoplasm. Reduces organic and inorganic peroxide substrates. Protects the cell against oxidative stress. This is Hydroperoxide reductase from Mycoplasma genitalium (strain ATCC 33530 / DSM 19775 / NCTC 10195 / G37) (Mycoplasmoides genitalium).